The following is a 681-amino-acid chain: Pentatricopeptide repeat-containing protein At2g22410, mitochondrial (681 aa).

The transit peptide at 1 to 32 (MNISKAKLLLLPPPLTPKLNRSLYSHSQRRTR) directs the protein to the mitochondrion. 13 PPR repeats span residues 117-151 (NIFSWNVTIRGFSESENPKESFLLYKQMLRHGCCE), 155-189 (DHFTYPVLFKVCADLRLSSLGHMILGHVLKLRLEL), 190-220 (VSHVHNASIHMFASCGDMENARKVFDESPVR), 221-255 (DLVSWNCLINGYKKIGEAEKAIYVYKLMESEGVKP), 256-290 (DDVTMIGLVSSCSMLGDLNRGKEFYEYVKENGLRM), 291-321 (TIPLVNALMDMFSKCGDIHEARRIFDNLEKR), 322-356 (TIVSWTTMISGYARCGLLDVSRKLFDDMEEKDVVL), 357-387 (WNAMIGGSVQAKRGQDALALFQEMQTSNTKP), 388-422 (DEITMIHCLSACSQLGALDVGIWIHRYIEKYSLSL), 423-453 (NVALGTSLVDMYAKCGNISEALSVFHGIQTR), 454-488 (NSLTYTAIIGGLALHGDASTAISYFNEMIDAGIAP), 489-519 (DEITFIGLLSACCHGGMIQTGRDYFSQMKSR), and 525-555 (QLKHYSIMVDLLGRAGLLEEADRLMESMPME). The interval 560 to 635 (VWGALLFGCR…IPGCSSIEVN (76 aa)) is type E motif. The segment at 636–666 (GIVCEFIVRDKSRPESEKIYDRLHCLGRHMR) is type E(+) motif.

The protein belongs to the PPR family. PCMP-E subfamily.

It is found in the mitochondrion. This is Pentatricopeptide repeat-containing protein At2g22410, mitochondrial (PCMP-E28) from Arabidopsis thaliana (Mouse-ear cress).